Reading from the N-terminus, the 260-residue chain is MTILSEIVKYKQSLLQNGYYQDKLNTLKSVKIQNKKSFINAIEKEPKLAIIAEIKSKSPTVNDLPERDLSQQISDYDQYGANAVSILTDEKYFSGSFERLQALTTKTTLPVLCKDFIIDPLQIDVAKQAGASMILLIVNILSDKQLKDLYNYAISQNLEVLVEVHDRHELERAYKVNAKLIGVNNRDLKRFVTNVEHTNTILENKKTNHYYISESGIHDASDVRKILHSGIDGLLIGEALMRCDNLSEFLPQLKMQKVKS.

This sequence belongs to the TrpC family.

The enzyme catalyses 1-(2-carboxyphenylamino)-1-deoxy-D-ribulose 5-phosphate + H(+) = (1S,2R)-1-C-(indol-3-yl)glycerol 3-phosphate + CO2 + H2O. Its pathway is amino-acid biosynthesis; L-tryptophan biosynthesis; L-tryptophan from chorismate: step 4/5. This chain is Indole-3-glycerol phosphate synthase, found in Staphylococcus aureus (strain COL).